The primary structure comprises 241 residues: uncharacterized protein (241 aa).

Residues T78–A80, G111, I131, and S138–L140 each bind S-adenosyl-L-methionine.

The protein belongs to the class IV-like SAM-binding methyltransferase superfamily. RNA methyltransferase TrmH family.

This is an uncharacterized protein from Haemophilus influenzae (strain ATCC 51907 / DSM 11121 / KW20 / Rd).